A 632-amino-acid chain; its full sequence is Deoxynucleoside triphosphate triphosphohydrolase SAMHD1 (632 aa).

A disordered region spans residues 1 to 22; sequence MKGINGAKRVRHDASPSAQDGY. Residues 44–107 form the SAM domain; it reads WDVEEVCLFL…LSCLRMLCQN (64 aa). Residues Lys113 and Val114 each coordinate GTP. Residue Asn116 coordinates dGTP. GTP is bound by residues Asp134, Gln139, and Arg142. Residues Gln146, Leu147, Val153, and Arg161 each coordinate dGTP. Gln146 contacts dATP. Residue Gln146 participates in dCTP binding. A dTTP-binding site is contributed by Gln146. Arg161 serves as a coordination point for dATP. Arg161 is a binding site for dCTP. Residue Arg161 participates in dTTP binding. The region spanning 161-321 is the HD domain; the sequence is RFEHSIGVGY…GIDVDKWDYF (161 aa). His164, His203, and Asp204 together coordinate Mn(2+). DATP-binding residues include His207 and His212. DCTP is bound by residues His207 and His212. DTTP contacts are provided by His207 and His212. The active site involves His230. Asp316 contributes to the Mn(2+) binding site. Positions 317, 320, 324, 338, 357, 359, 363, 371, 379, 380, 381, and 382 each coordinate dGTP. The dATP site is built by Lys317, Tyr320, and Asp324. DCTP is bound by residues Lys317, Tyr320, and Asp324. Lys317, Tyr320, and Asp324 together coordinate dTTP. Arg371 serves as a coordination point for dATP. Arg371 contacts dCTP. Gln380 is a dATP binding site. Gln380 contributes to the dCTP binding site. Gln380 provides a ligand contact to dTTP. GTP is bound by residues Arg456, Lys460, and Lys529. A dGTP-binding site is contributed by Lys529.

Belongs to the SAMHD1 family. Homodimer; in absence of GTP and dNTP. Homotetramer; in GTP- and dNTP-bound form. Interacts with rbbp8/CtIP. The cofactor is Zn(2+).

The protein localises to the nucleus. It is found in the chromosome. It catalyses the reaction a 2'-deoxyribonucleoside 5'-triphosphate + H2O = a 2'-deoxyribonucleoside + triphosphate + H(+). It carries out the reaction dATP + H2O = 2'-deoxyadenosine + triphosphate + H(+). The enzyme catalyses dCTP + H2O = 2'-deoxycytidine + triphosphate + H(+). The catalysed reaction is dGTP + H2O = 2'-deoxyguanosine + triphosphate + H(+). It catalyses the reaction dTTP + H2O = thymidine + triphosphate + H(+). Its activity is regulated as follows. Allosterically activated and regulated via the combined actions of GTP and dNTPs (dATP, dGTP, dTTP and dCTP): Allosteric site 1 binds GTP, while allosteric site 2 binds dNTP. Allosteric activation promotes the formation of highly active homotetramers. In terms of biological role, protein that acts both as a host restriction factor involved in defense response to virus and as a regulator of DNA end resection at stalled replication forks. Has deoxynucleoside triphosphate (dNTPase) activity, which is required to restrict infection by viruses: dNTPase activity reduces cellular dNTP levels to levels too low for retroviral reverse transcription to occur, blocking early-stage virus replication in dendritic and other myeloid cells. Functions during S phase at stalled DNA replication forks to promote the resection of gapped or reversed forks: acts by stimulating the exonuclease activity of mre11, activating the ATR-CHK1 pathway and allowing the forks to restart replication. Ability to promote DNA end resection at stalled replication forks is independent of dNTPase activity. This chain is Deoxynucleoside triphosphate triphosphohydrolase SAMHD1, found in Xenopus laevis (African clawed frog).